The chain runs to 254 residues: Proline-rich protein 23A3 (254 aa).

Disordered stretches follow at residues 1-50, 161-196, and 212-254; these read MLRT…LEAP, ASPP…GAEQ, and PFPG…LVYE. Over residues 35 to 50 the composition is skewed to low complexity; the sequence is EPACPEPLAQPELEAP. Over residues 214 to 241 the composition is skewed to pro residues; that stretch reads PGSPLQPLPPSPSRNPQEQLPPCPPCSP. The span at 243–254 shows a compositional bias: basic residues; it reads APRRARKRLVYE.

The protein belongs to the PRR23 family.

This is Proline-rich protein 23A3 from Mus musculus (Mouse).